Here is a 311-residue protein sequence, read N- to C-terminus: Interleukin-20 receptor subunit beta (311 aa).

Positions 1–29 (MQTFTMVLEEIWTSLFMWFFYALIPCLLT) are cleaved as a signal peptide. Topologically, residues 30–233 (DEVAILPAPQ…VEVQGEAIPL (204 aa)) are extracellular. 2 Fibronectin type-III domains span residues 37-136 (APQN…RNST) and 144-228 (EITK…EVQG). Residue asparagine 40 is glycosylated (N-linked (GlcNAc...) asparagine). A disulfide bond links cysteine 89 and cysteine 97. A glycan (N-linked (GlcNAc...) asparagine) is linked at asparagine 134. A disulfide bridge connects residues cysteine 202 and cysteine 223. A helical transmembrane segment spans residues 234–254 (VLALFAFVGFMLILVVVPLFV). Topologically, residues 255 to 311 (WKMGRLLQYSCCPVVVLPDTLKITNSPQKLISCRREEVDACATAVMSPEELLRAWIS) are cytoplasmic.

This sequence belongs to the type II cytokine receptor family. Heterodimer with IL20RA and heterodimer with IL22RA1. As to expression, widely expressed with highest levels in skin and testis. Highly expressed in psoriatic skin.

Its subcellular location is the membrane. Its function is as follows. The IL20RA/IL20RB dimer is a receptor for IL19, IL20 and IL24. The IL22RA1/IL20RB dimer is a receptor for IL20 and IL24. This chain is Interleukin-20 receptor subunit beta (IL20RB), found in Homo sapiens (Human).